We begin with the raw amino-acid sequence, 482 residues long: Glutamate--tRNA ligase (482 aa).

A 'HIGH' region motif is present at residues 9 to 19 (PSPTGYLHIGG). Positions 252 to 256 (KLSKR) match the 'KMSKS' region motif. Lysine 255 serves as a coordination point for ATP.

Belongs to the class-I aminoacyl-tRNA synthetase family. Glutamate--tRNA ligase type 1 subfamily. In terms of assembly, monomer.

It localises to the cytoplasm. It catalyses the reaction tRNA(Glu) + L-glutamate + ATP = L-glutamyl-tRNA(Glu) + AMP + diphosphate. Its function is as follows. Catalyzes the attachment of glutamate to tRNA(Glu) in a two-step reaction: glutamate is first activated by ATP to form Glu-AMP and then transferred to the acceptor end of tRNA(Glu). The polypeptide is Glutamate--tRNA ligase (Ureaplasma urealyticum serovar 10 (strain ATCC 33699 / Western)).